A 374-amino-acid chain; its full sequence is MARSLTWGCCPWCLTEEEKTAARIDQEINKILLEQKKQERGELKLLLLGPGESGKSTFIKQMRIIHGAGYSEEDRRAFRLLVYQNIFVSMQAMIEAMDRLQIPFSRPDSKQHASLVMTQDPYKVSSFEKPYAVAMQYLWRDAGIRACYERRREFHLLDSAVYYLSHLERIAEDDYIPTAQDVLRSRMPTTGINEYCFSVQKTKLRIVDAGGQKSERKKWIHCFENVIALIYLASLSEYDQCLEENSQENRMKESLALFSTILELPWFKSTSVILFLNKTDILEDKIHTSHLASYFPSFQGPRRDAEAAKRFILDMYARVYASCAEPHDGGRKGSRARRLFAHFTCATDTHSVRSVFKDVRDSVLARYLDEINLL.

In terms of domain architecture, G-alpha spans 41-374 (GELKLLLLGP…ARYLDEINLL (334 aa)). A G1 motif region spans residues 44–57 (KLLLLGPGESGKST). Residues 49-56 (GPGESGKS), 183-189 (LRSRMPT), 208-212 (DAGGQ), 277-280 (NKTD), and Ala346 contribute to the GTP site. Ser56 and Thr189 together coordinate Mg(2+). The segment at 181-189 (DVLRSRMPT) is G2 motif. The interval 204-213 (LRIVDAGGQK) is G3 motif. The interval 273 to 280 (ILFLNKTD) is G4 motif. A G5 motif region spans residues 344–349 (TCATDT).

This sequence belongs to the G-alpha family. G(q) subfamily. G proteins are composed of 3 units; alpha, beta and gamma. The alpha chain contains the guanine nucleotide binding site.

Functionally, guanine nucleotide-binding proteins (G proteins) are involved as modulators or transducers in various transmembrane signaling systems. The chain is Guanine nucleotide-binding protein subunit alpha-15 (Gna15) from Rattus norvegicus (Rat).